The chain runs to 130 residues: Small ribosomal subunit protein uS9 (130 aa).

It belongs to the universal ribosomal protein uS9 family.

In Shigella dysenteriae serotype 1 (strain Sd197), this protein is Small ribosomal subunit protein uS9.